An 80-amino-acid polypeptide reads, in one-letter code: Beta-toxin KAaH1 (80 aa).

Residues M1–G22 form the signal peptide. The region spanning V25–I80 is the LCN-type CS-alpha/beta domain. 3 cysteine pairs are disulfide-bonded: C40-C63, C49-C68, and C53-C70.

The protein belongs to the long (3 C-C) scorpion toxin superfamily. Sodium/Potassium channel inhibitor family. As to expression, expressed by the venom gland.

It is found in the secreted. Its function is as follows. Inhibits the vertebrate potassium channels Kv1.1/KCNA1 and Kv1.3/KCNA3 in vitro with an IC(50) of 5.3 nM and 50.0 nM respectively. In Androctonus australis (Sahara scorpion), this protein is Beta-toxin KAaH1.